The sequence spans 191 residues: Salivary lipocalin (191 aa).

Residues 1–16 form the signal peptide; sequence MKLLLLLCLGLTLASS. The N-linked (GlcNAc...) asparagine glycan is linked to Asn-69. An intrachain disulfide couples Cys-84 to Cys-176.

The protein belongs to the calycin superfamily. Lipocalin family. As to quaternary structure, homodimer. As to expression, in the submaxillary salivary glands of mature male pigs, but absent from that of females. Expression was much lower in submaxillary glands of castrated male pigs than in sexually mature individuals.

Its subcellular location is the secreted. Its function is as follows. Binds pheromones, the pheromones are released from the saliva of males and affect the sexual behavior of females. This Sus scrofa (Pig) protein is Salivary lipocalin (SAL1).